A 237-amino-acid chain; its full sequence is Phosphoribosylaminoimidazole-succinocarboxamide synthase (237 aa).

This sequence belongs to the SAICAR synthetase family.

The catalysed reaction is 5-amino-1-(5-phospho-D-ribosyl)imidazole-4-carboxylate + L-aspartate + ATP = (2S)-2-[5-amino-1-(5-phospho-beta-D-ribosyl)imidazole-4-carboxamido]succinate + ADP + phosphate + 2 H(+). It participates in purine metabolism; IMP biosynthesis via de novo pathway; 5-amino-1-(5-phospho-D-ribosyl)imidazole-4-carboxamide from 5-amino-1-(5-phospho-D-ribosyl)imidazole-4-carboxylate: step 1/2. The sequence is that of Phosphoribosylaminoimidazole-succinocarboxamide synthase from Proteus mirabilis (strain HI4320).